Reading from the N-terminus, the 132-residue chain is Female-specific protein 800 (132 aa).

FS800 is likely to have some function in the production or maintenance of the schistosome egg. It may have a function unrelated to eggshell formation. The protein is Female-specific protein 800 of Schistosoma mansoni (Blood fluke).